Here is a 911-residue protein sequence, read N- to C-terminus: Alpha-actinin-4 (911 aa).

The segment at 1–269 (MVDYHAANQS…YVSSFYHAFS (269 aa)) is actin-binding. A disordered region spans residues 8-31 (NQSYQYGPSSGSNGAGGGGTMGDY). The segment at 12–26 (QYGPSSGSNGAGGGG) is interaction with VCL. Position 31 is a phosphotyrosine (Tyr-31). The interaction with VCL stretch occupies residues 40–61 (RDLLLDPAWEKQQRKTFTAWCN). 2 Calponin-homology (CH) domains span residues 50-154 (KQQR…LRFA) and 163-269 (TSAK…HAFS). An LXXLL motif motif is present at residues 84 to 88 (LMLLL). The interaction with VCL stretch occupies residues 108-126 (KINNVNKALDFIASKGVKL). Residue Lys-114 is modified to N6-acetyllysine. Positions 177 to 192 (TAPYKNVNVQNFHISW) are polyphosphoinositide (PIP2)-binding. Residue Lys-214 is modified to N6-acetyllysine. Thr-249 is subject to Phosphothreonine. Spectrin repeat units follow at residues 293–403 (HLME…WLLN), 413–518 (HLAE…ALEK), 528–639 (QLHL…ALLE), and 649–752 (HLRR…EVEN). An N6-acetyllysine mark is found at Lys-592 and Lys-625. Residue Ser-696 is modified to Phosphoserine. The mediates interaction with MICALL2 stretch occupies residues 736–911 (WEQLLTTIAR…STALYGESDL (176 aa)). 2 consecutive EF-hand domains span residues 765–800 (EQMQ…LGYD) and 806–841 (QGDA…ETTD). Asp-778 is a binding site for Ca(2+). N6-acetyllysine is present on Lys-779. Ca(2+) is bound by residues Asp-780 and Glu-789. Lys-859 is modified (N6-acetyllysine). Ser-909 is subject to Phosphoserine.

Belongs to the alpha-actinin family. Homodimer; antiparallel. Identified in a IGF2BP1-dependent mRNP granule complex containing untranslated mRNAs. Component of the CART complex, at least composed of ACTN4, HGS/HRS, MYO5B and TRIM3. Binds TRIM3 at the N-terminus. Interacts with MAGI1. Interacts with PDLIM2. Identified in a complex with CASK, IQGAP1, MAGI2, NPHS1, SPTAN1 and SPTBN1. Interacts with MICALL2 (preferentially in opened conformation); stimulated by RAB13 activation. Interacts with PPARG and RARA. Binds to VCL; this interaction triggers VCL conformational changes. Interacts with SEPTIN14. Interacts with IGSF8.

It localises to the nucleus. It is found in the cytoplasm. Its subcellular location is the cell junction. The protein resides in the cytoskeleton. The protein localises to the stress fiber. It localises to the perinuclear region. In terms of biological role, F-actin cross-linking protein which is thought to anchor actin to a variety of intracellular structures. This is a bundling protein. Probably involved in vesicular trafficking via its association with the CART complex. The CART complex is necessary for efficient transferrin receptor recycling but not for EGFR degradation. Involved in tight junction assembly in epithelial cells probably through interaction with MICALL2. Links MICALL2 to the actin cytoskeleton and recruits it to the tight junctions. May also function as a transcriptional coactivator, stimulating transcription mediated by the nuclear hormone receptors PPARG and RARA. Association with IGSF8 regulates the immune synapse formation and is required for efficient T-cell activation. The chain is Alpha-actinin-4 from Bos taurus (Bovine).